The following is a 505-amino-acid chain: ATP synthase subunit alpha (505 aa).

Glycine 169 to threonine 176 provides a ligand contact to ATP.

It belongs to the ATPase alpha/beta chains family. As to quaternary structure, F-type ATPases have 2 components, CF(1) - the catalytic core - and CF(0) - the membrane proton channel. CF(1) has five subunits: alpha(3), beta(3), gamma(1), delta(1), epsilon(1). CF(0) has three main subunits: a(1), b(2) and c(9-12). The alpha and beta chains form an alternating ring which encloses part of the gamma chain. CF(1) is attached to CF(0) by a central stalk formed by the gamma and epsilon chains, while a peripheral stalk is formed by the delta and b chains.

Its subcellular location is the cell membrane. The enzyme catalyses ATP + H2O + 4 H(+)(in) = ADP + phosphate + 5 H(+)(out). Produces ATP from ADP in the presence of a proton gradient across the membrane. The alpha chain is a regulatory subunit. This chain is ATP synthase subunit alpha, found in Alkaliphilus oremlandii (strain OhILAs) (Clostridium oremlandii (strain OhILAs)).